Reading from the N-terminus, the 199-residue chain is MASGSGTKNLDFRRKWDKDEYEKLAEKRLTEEREKKDGKPVQPVKRELLRHRDYKVDLESKLGKTIVITKTTPQSEMGGYYCNVCDCVVKDSINFLDHINGKKHQRNLGMSMRVERSTLDQVKKRFEVNKKKMEEKQKDYDFEERMKELREEEEKAKAYKKEKQKEKKRRAEEDLTFEEDDEMAAVMGFSGFGSTKKSY.

The residue at position 2 (Ala-2) is an N-acetylalanine. Residues Lys-8, Lys-36, Lys-39, Lys-45, Lys-55, Lys-61, Lys-64, Lys-70, Lys-102, and Lys-123 each participate in a glycyl lysine isopeptide (Lys-Gly) (interchain with G-Cter in SUMO2) cross-link. A disordered region spans residues 27–46 (KRLTEEREKKDGKPVQPVKR). The segment at 80–104 (YYCNVCDCVVKDSINFLDHINGKKH) adopts a Matrin-type zinc-finger fold. A compositionally biased stretch (basic and acidic residues) spans 150-173 (REEEEKAKAYKKEKQKEKKRRAEE). Residues 150-175 (REEEEKAKAYKKEKQKEKKRRAEEDL) are disordered.

As to quaternary structure, component of the spliceosome B complex.

It is found in the nucleus. Functionally, involved in pre-mRNA splicing as a component of the spliceosome. In Homo sapiens (Human), this protein is Zinc finger matrin-type protein 2 (ZMAT2).